Consider the following 62-residue polypeptide: Large ribosomal subunit protein bL28 (62 aa).

The interval 1–27 (MARKCVVTGRQTRSGNQRSHAMNSNKR) is disordered. Polar residues predominate over residues 9 to 26 (GRQTRSGNQRSHAMNSNK).

It belongs to the bacterial ribosomal protein bL28 family.

This Oceanobacillus iheyensis (strain DSM 14371 / CIP 107618 / JCM 11309 / KCTC 3954 / HTE831) protein is Large ribosomal subunit protein bL28.